Here is a 476-residue protein sequence, read N- to C-terminus: Glycogen synthase (476 aa).

Lysine 15 lines the ADP-alpha-D-glucose pocket.

It belongs to the glycosyltransferase 1 family. Bacterial/plant glycogen synthase subfamily.

The catalysed reaction is [(1-&gt;4)-alpha-D-glucosyl](n) + ADP-alpha-D-glucose = [(1-&gt;4)-alpha-D-glucosyl](n+1) + ADP + H(+). It participates in glycan biosynthesis; glycogen biosynthesis. Its function is as follows. Synthesizes alpha-1,4-glucan chains using ADP-glucose. The sequence is that of Glycogen synthase from Bacillus cereus (strain ATCC 14579 / DSM 31 / CCUG 7414 / JCM 2152 / NBRC 15305 / NCIMB 9373 / NCTC 2599 / NRRL B-3711).